Consider the following 727-residue polypeptide: Probable copper-importing P-type ATPase A (727 aa).

The Cytoplasmic segment spans residues 1–94 (MATNTKMETF…QTYLRKMKFD (94 aa)). The 65-residue stretch at 6-70 (KMETFVITGM…SVENIGYGAI (65 aa)) folds into the HMA domain. Cu(+)-binding residues include Cys-17 and Cys-20. The helical transmembrane segment at 95–115 (LIFSAILTLPLMLAMIAMMLG) threads the bilayer. At 116-119 (SHGP) the chain is on the extracellular side. The helical transmembrane segment at 120-137 (IVSFFHLSLVQLLFALPV) threads the bilayer. At 138–161 (QFYVGWRFYKGAYHALKTKAPNMD) the chain is on the cytoplasmic side. The chain crosses the membrane as a helical span at residues 162–181 (VLVAIGTSAAFALSIYNGFF). The Extracellular segment spans residues 182-187 (PSHSHD). Residues 188 to 203 (LYFESSSMIITLILLG) traverse the membrane as a helical segment. The Cytoplasmic segment spans residues 204–341 (KYLEHTAKSK…PIQQIADKIS (138 aa)). A helical transmembrane segment spans residues 342 to 362 (GIFVPIVLFLALVTLLVTGWL). Residues 363-375 (TKDWQLALLHSVS) lie on the Extracellular side of the membrane. The chain crosses the membrane as a helical span at residues 376-396 (VLVIACPCALGLATPTAIMVG). Over 397 to 678 (TGVGAHNGIL…AATLKKIKQN (282 aa)) the chain is Cytoplasmic. The active-site 4-aspartylphosphate intermediate is the Asp-425. Residues Asp-621 and Asp-625 each coordinate Mg(2+). A helical transmembrane segment spans residues 679–698 (LFWAFIYNTIGIPFAAFGFL). Residues 699–700 (NP) are Extracellular-facing. Residues 701–721 (IIAGGAMAFSSISVLLNSLSL) traverse the membrane as a helical segment. The Cytoplasmic portion of the chain corresponds to 722–727 (NRKTIK).

This sequence belongs to the cation transport ATPase (P-type) (TC 3.A.3) family. Type IB subfamily. In terms of assembly, monomer. Interacts with the copper chaperone CopZ.

It is found in the cell membrane. The enzyme catalyses Cu(+)(in) + ATP + H2O = Cu(+)(out) + ADP + phosphate + H(+). With respect to regulation, inhibited by vanadate. Its function is as follows. Probably involved in copper import under copper limiting conditions. The sequence is that of Probable copper-importing P-type ATPase A (copA) from Enterococcus hirae (strain ATCC 9790 / DSM 20160 / JCM 8729 / LMG 6399 / NBRC 3181 / NCIMB 6459 / NCDO 1258 / NCTC 12367 / WDCM 00089 / R).